The sequence spans 1116 residues: MCLLDSCTALLLLGCWMSGSAVRISDVTLVNPDPVVSPLTAPSLLCVSSDWSSGGSVLALGQEFPRPQGSVLALGQEFPHTEPRPHPAAATVTWSSRSHAFGAFYCQIRNSTGRKIYTYKMLQEAAFLPESLTITVNQGENINISYSRRLYSPEDTVIHKNGHFEHSSPKEDISDIIHYPVTNAKAESHAGIYAIRYISAAPSSAAITRLIVRSCRAGFWGPNCTESCPRCANGGVCDDTTGECVCPPGFRGHTCDIVCGEGRFGAGCKERCVDGVCRALVFCLRDPYGCSCASGWRGLSCNDACPDGYYGAGCTQKCVCAKGRCDRFRGCVCAGRHGSRCEEADSSPVISHLRDVEINTGVELSVNCSASGRPAPLHGDITLITANRTTIAAVDTHTLNDQSTSVFRVQQVRVSSAGRWRCQVNNTHMQVEDEFTVEVKVPPRPQNPPVLQGSGPRHLLLLLNTEPYSGDGPIATTTLLYRPASAHTWSSVTAHGPLVRLDNLYPMTQYLTQVQLSRPGPGGAGQAGPAATFSTQVLELPVGVKLSAVSQTALLLSWDIAPAEQHCTYEVSCLQAGAPGTLRTFQLPSNSSAMHLSDLKPRHKYQCTVRSSCGVGQNHPSASAWTLSDQLPPPPANISIWNISDTSAVLTWAVAEGESVSRAVIRFQQVEQAQYRQQVELPVQTQQLHMRFQLLGLRPNTGYQLQLWTVNNMGESAESPPVSLMTLPQQESSALFAAHGHLLLYAILGSAGMTCCTVLLAFCIVLQLKRNTLQRRIHSILREEPAVHFSSAPPPHRRSAVVSRSLVFPALQWSDIQFQDVLGEGNFGQVLKARIRKDGLRMDAAVKRMKDYASQDDHRDFAGELEVLCRLGPHKNIIHLLGACEHRGYLYLAIEFAPHGNLLDFLRKSRVLETDPAFAIAHRTASTLSSQQLLAFSADVARGMSYLSQKQFIHRDLAARNVLVGENFVAKIADFGLSRGQEVYVKKTMGRLPVRWMAIESLNYSVYTTNSDVWSYGVLLWEVVSLGGTPYCGMTCAELYEKLPLGFRLEKPLNCDDEVYELMQQCWREKPFERPSFSQILLSLGRMLEERKTYVNTTLYEKFTYAGIDCSAEEAG.

Residues 1 to 21 form the signal peptide; sequence MCLLDSCTALLLLGCWMSGSA. At 22–745 the chain is on the extracellular side; it reads VRISDVTLVN…FAAHGHLLLY (724 aa). Cys-46 and Cys-106 form a disulfide bridge. An Ig-like C2-type 1 domain is found at 46 to 126; that stretch reads CVSSDWSSGG…YTYKMLQEAA (81 aa). Asn-110, Asn-143, and Asn-223 each carry an N-linked (GlcNAc...) asparagine glycan. 3 consecutive EGF-like domains span residues 214-256, 258-302, and 304-342; these read SCRA…HTCD, VCGE…LSCN, and ACPD…SRCE. Cystine bridges form between Cys-215–Cys-224, Cys-228–Cys-237, Cys-231–Cys-244, Cys-246–Cys-255, Cys-259–Cys-268, Cys-272–Cys-277, Cys-283–Cys-290, Cys-292–Cys-301, Cys-305–Cys-314, Cys-318–Cys-325, Cys-320–Cys-331, and Cys-333–Cys-341. An Ig-like C2-type 2 domain is found at 348 to 438; it reads PVISHLRDVE…MQVEDEFTVE (91 aa). Asn-367, Asn-387, and Asn-425 each carry an N-linked (GlcNAc...) asparagine glycan. Cys-368 and Cys-422 are joined by a disulfide. 3 Fibronectin type-III domains span residues 444-538, 540-633, and 634-729; these read RPQN…TQVL, LPVG…QLPP, and PPAN…TLPQ. Asn-590, Asn-637, and Asn-642 each carry an N-linked (GlcNAc...) asparagine glycan. A helical membrane pass occupies residues 746–766; the sequence is AILGSAGMTCCTVLLAFCIVL. Over 767–1116 the chain is Cytoplasmic; it reads QLKRNTLQRR…GIDCSAEEAG (350 aa). The 280-residue stretch at 816 to 1095 folds into the Protein kinase domain; that stretch reads IQFQDVLGEG…RMLEERKTYV (280 aa). ATP contacts are provided by residues 822-830 and Lys-847; that span reads LGEGNFGQV. Tyr-852 is subject to Phosphotyrosine; by autocatalysis. Residue Asp-956 is the Proton acceptor of the active site. Phosphotyrosine; by autocatalysis occurs at positions 984, 1094, and 1100.

Belongs to the protein kinase superfamily. Tyr protein kinase family. Tie subfamily. Interacts with svep1. Autophosphorylated on tyrosine residues in response to ligand binding. Autophosphorylation occurs in trans, i.e. one subunit of the dimeric receptor phosphorylates tyrosine residues on the other subunit. Autophosphorylation occurs in a sequential manner, where Tyr-984 in the kinase activation loop is phosphorylated first, followed by autophosphorylation at additional tyrosine residues. Phosphorylation is important for interaction with scaffold proteins and effectors.

It localises to the cell membrane. The protein localises to the cell junction. The protein resides in the focal adhesion. It is found in the cytoplasm. Its subcellular location is the cytoskeleton. The enzyme catalyses L-tyrosyl-[protein] + ATP = O-phospho-L-tyrosyl-[protein] + ADP + H(+). Angiopoietin binding leads to receptor dimerization and activation by autophosphorylation at Tyr-984 on the kinase activation loop. Functionally, tyrosine-protein kinase that acts as a cell-surface receptor for angiopoietins and regulates angiogenesis, endothelial cell survival, proliferation, migration, adhesion and cell spreading, reorganization of the actin cytoskeleton, but also maintenance of vascular quiescence. Can activate or inhibit angiogenesis, depending on the context. Angiopoietin signaling triggers receptor dimerization and autophosphorylation at specific tyrosine residues that then serve as binding sites for scaffold proteins and effectors. In Danio rerio (Zebrafish), this protein is Angiopoietin-1 receptor.